Consider the following 138-residue polypeptide: Small ribosomal subunit protein uS11B (138 aa).

The disordered stretch occupies residues 118–138 (DVTPVPSDSTRKKGGRRGRRL). Residues 129 to 138 (KKGGRRGRRL) show a composition bias toward basic residues.

It belongs to the universal ribosomal protein uS11 family. In terms of assembly, component of the small ribosomal subunit (SSU). Mature yeast ribosomes consist of a small (40S) and a large (60S) subunit. The 40S small subunit contains 1 molecule of ribosomal RNA (18S rRNA) and 33 different proteins (encoded by 57 genes). The large 60S subunit contains 3 rRNA molecules (25S, 5.8S and 5S rRNA) and 46 different proteins (encoded by 81 genes). uS11 interacts with eS1 forming part of the mRNA exit tunnel. uS11 interacts with snoRNA U3. uS11 interacts with MPP10. Component of the ribosomal small subunit (SSU) processome composed of at least 40 protein subunits and snoRNA U3.

The protein localises to the cytoplasm. The protein resides in the nucleus. Its subcellular location is the nucleolus. In terms of biological role, component of the ribosome, a large ribonucleoprotein complex responsible for the synthesis of proteins in the cell. The small ribosomal subunit (SSU) binds messenger RNAs (mRNAs) and translates the encoded message by selecting cognate aminoacyl-transfer RNA (tRNA) molecules. The large subunit (LSU) contains the ribosomal catalytic site termed the peptidyl transferase center (PTC), which catalyzes the formation of peptide bonds, thereby polymerizing the amino acids delivered by tRNAs into a polypeptide chain. The nascent polypeptides leave the ribosome through a tunnel in the LSU and interact with protein factors that function in enzymatic processing, targeting, and the membrane insertion of nascent chains at the exit of the ribosomal tunnel. uS11 is involved in nucleolar processing of pre-18S ribosomal RNA and ribosome assembly. This chain is Small ribosomal subunit protein uS11B, found in Saccharomyces cerevisiae (strain ATCC 204508 / S288c) (Baker's yeast).